Here is a 146-residue protein sequence, read N- to C-terminus: Small ribosomal subunit protein eS19 (146 aa).

Belongs to the eukaryotic ribosomal protein eS19 family.

This is Small ribosomal subunit protein eS19 (RPS19A) from Oryza sativa subsp. japonica (Rice).